A 1012-amino-acid chain; its full sequence is Vacuolar membrane protease (1012 aa).

Residues 1–60 (MRRSTDPRNLLVRRGPLLVDGESAISELDPGFFPTGDAPKMSSTTRRRFNLIAFTPGPVT) lie on the Cytoplasmic side of the membrane. Residues 61–81 (VISSLVYLALLIPLLLVHTIV) traverse the membrane as a helical segment. The Vacuolar portion of the chain corresponds to 82–432 (PSAPKSNPKG…SFAVFRLHTL (351 aa)). N159 is a glycosylation site (N-linked (GlcNAc...) asparagine). Residues H215 and D227 each contribute to the Zn(2+) site. E261 functions as the Proton acceptor in the catalytic mechanism. Zn(2+) is bound by residues E262, E287, and H360. Residues 433-453 (FAISVTLLVVCPIVLFVIGII) form a helical membrane-spanning segment. Residues 454-487 (LSKMDKMYLFSIHETIPETKEKVSVRGLRGLFRY) are Cytoplasmic-facing. Residues 488-508 (PIILVVSSGILIGLSYLLAKV) traverse the membrane as a helical segment. At 509–518 (NPFIVHSSSY) the chain is on the vacuolar side. A helical transmembrane segment spans residues 519–539 (AVWSMMLSSWIFMTWFLSCIA). At 540-550 (DFFRPSALHRA) the chain is on the cytoplasmic side. Residues 551 to 571 (YTFTWQLLVMWVLLVISTVYV) traverse the membrane as a helical segment. Over 572–575 (NQHD) the chain is Vacuolar. A helical membrane pass occupies residues 576–596 (IAAGYFIVFYFAGTFLATLIS). The Cytoplasmic segment spans residues 597–710 (YLELFALPNK…WSASLPTWTW (114 aa)). The segment covering 614 to 629 (SQYPSRLGSNRSSRIL) has biased composition (polar residues). The tract at residues 614-660 (SQYPSRLGSNRSSRILSPSADELPTGGDNNGEIYDGEEEPTESSSLL) is disordered. A helical membrane pass occupies residues 711–731 (VLQFLFVGPVVIMFIGQLGLF). The Vacuolar segment spans residues 732–743 (LTSAMNQVGADG). Residues 744-764 (VGLLVVYIAIAVFSVLLLIPL) form a helical membrane-spanning segment. Topologically, residues 765–777 (SPFIHRFTYHVPT) are cytoplasmic. Residues 778–798 (FLLLVFIATLIYNLAAFPFSA) traverse the membrane as a helical segment. The Vacuolar segment spans residues 799–1012 (ENRLKIFFVQ…DGLVEVSRGF (214 aa)). N-linked (GlcNAc...) asparagine glycans are attached at residues N842 and N878.

The protein belongs to the peptidase M28 family. It depends on Zn(2+) as a cofactor.

It localises to the vacuole membrane. Its function is as follows. May be involved in vacuolar sorting and osmoregulation. The protein is Vacuolar membrane protease of Coccidioides posadasii (strain C735) (Valley fever fungus).